The chain runs to 517 residues: Ladinin-1 (517 aa).

Positions 1 to 401 are disordered; the sequence is MAVSRKDWSA…SASMKLPDNT (401 aa). S38 is modified (phosphoserine). The segment covering 48 to 58 has biased composition (polar residues); it reads LSQNGDRQASA. 4 positions are modified to phosphoserine: S64, S78, S121, and S123. The span at 120-131 shows a compositional bias: polar residues; that stretch reads NSLSPVQATQKP. Composition is skewed to basic and acidic residues over residues 134-151 and 161-174; these read SKKE…REQR and LVGR…KGVP. 8 SEK repeats span residues 203 to 205, 209 to 211, 215 to 217, 221 to 223, 227 to 229, 239 to 241, 257 to 259, and 269 to 271; these read SEK. Residues 203–271 form an 8 X SEK repeats region; that stretch reads SEKVLASEKT…IFEKALASEK (69 aa). A compositionally biased stretch (basic and acidic residues) spans 219-233; that stretch reads AVSEKRNSSEKKSVL. 3 positions are modified to phosphoserine: S347, S356, and S394. Residues 355-373 are compositionally biased toward polar residues; it reads SSPTQRTYSSSLKRSSPRT. At R424 the chain carries Omega-N-methylarginine. Positions 481–517 are disordered; that stretch reads RTQESGDQDPQEAQKASSATERTQWGQKSDSSLDAEV. S485 carries the phosphoserine modification. Residues 494–517 are compositionally biased toward polar residues; that stretch reads QKASSATERTQWGQKSDSSLDAEV.

The protein localises to the secreted. Its subcellular location is the extracellular space. It is found in the extracellular matrix. It localises to the basement membrane. Anchoring filament protein which is a component of the basement membrane zone. The protein is Ladinin-1 (LAD1) of Homo sapiens (Human).